The primary structure comprises 135 residues: Ribosome-binding factor A (135 aa).

It belongs to the RbfA family. As to quaternary structure, monomer. Binds 30S ribosomal subunits, but not 50S ribosomal subunits or 70S ribosomes.

It localises to the cytoplasm. In terms of biological role, one of several proteins that assist in the late maturation steps of the functional core of the 30S ribosomal subunit. Associates with free 30S ribosomal subunits (but not with 30S subunits that are part of 70S ribosomes or polysomes). Required for efficient processing of 16S rRNA. May interact with the 5'-terminal helix region of 16S rRNA. In Rhodopseudomonas palustris (strain HaA2), this protein is Ribosome-binding factor A.